The primary structure comprises 7603 residues: Cysteine repeat modular protein B (7603 aa).

Asn-172 carries N-linked (GlcNAc...) asparagine glycosylation. Residues Leu-223–Thr-243 form a helical membrane-spanning segment. 2 disordered regions span residues Gly-248–Gly-275 and Arg-291–Phe-323. Residues Ser-263–Gly-275 show a composition bias toward low complexity. Residues Ser-302–Arg-313 show a composition bias toward basic residues. 6 N-linked (GlcNAc...) asparagine glycosylation sites follow: Asn-329, Asn-589, Asn-848, Asn-1128, Asn-1183, and Asn-1402. Residues Val-1554–Phe-1574 form a disordered region. A compositionally biased stretch (low complexity) spans Ser-1557–Ser-1573. N-linked (GlcNAc...) asparagine glycosylation is found at Asn-1622, Asn-2578, Asn-2664, Asn-3094, and Asn-3126. Positions Ser-3316–Asp-3445 are disordered. Over residues Glu-3321–Thr-3340 the composition is skewed to acidic residues. The segment covering Glu-3342 to Gly-3360 has biased composition (low complexity). Asn-3546, Asn-4367, Asn-4823, Asn-4901, Asn-5186, Asn-5546, and Asn-5666 each carry an N-linked (GlcNAc...) asparagine glycan. The disordered stretch occupies residues Leu-5758 to Lys-5799. Positions Thr-5767–Asp-5776 are enriched in acidic residues. The span at Ser-5780–Ser-5794 shows a compositional bias: low complexity. 5 N-linked (GlcNAc...) asparagine glycosylation sites follow: Asn-5806, Asn-5876, Asn-5998, Asn-6055, and Asn-6369. Residues Gly-6043–Ala-6115 are disordered. Residues Asp-6051 to Ser-6060 show a composition bias toward polar residues. The span at Glu-6391 to Glu-6405 shows a compositional bias: basic and acidic residues. Positions Glu-6391–Leu-6436 are disordered. Over residues Leu-6410–Ala-6423 the composition is skewed to polar residues. N-linked (GlcNAc...) asparagine glycosylation occurs at Asn-6453. 8 helical membrane passes run Ile-6520 to Ile-6540, Val-6552 to Ala-6572, Leu-6578 to Pro-6598, Ile-6627 to Thr-6647, Leu-6770 to Ala-6790, Cys-6831 to Phe-6851, Gly-6888 to Phe-6908, and Gly-6912 to Val-6932. The N-linked (GlcNAc...) asparagine glycan is linked to Asn-7013. A helical transmembrane segment spans residues Phe-7017–Ile-7037. Asn-7061 is a glycosylation site (N-linked (GlcNAc...) asparagine). The stretch at Ala-7174–Asp-7242 forms a coiled coil. The interval Ala-7379–Glu-7603 is disordered. The span at Leu-7408–Ala-7417 shows a compositional bias: polar residues. N-linked (GlcNAc...) asparagine glycosylation occurs at Asn-7411. Composition is skewed to low complexity over residues Pro-7474–Pro-7496, Ser-7509–Leu-7541, and Gly-7560–Pro-7582.

In terms of assembly, component of a complex, at least composed of cysteine repeat modular protein A (CRMPa), cysteine repeat modular protein B (CRMPb), micronemal protein 15 (MIC15) and thrombospondin type 1 domain-containing protein (TSP1).

It is found in the cell membrane. The protein localises to the endoplasmic reticulum. Its subcellular location is the golgi apparatus. In terms of biological role, required for triggering rhoptry secretion. Plays a role in host cell invasion. In Toxoplasma gondii, this protein is Cysteine repeat modular protein B.